The chain runs to 143 residues: UPF0201 protein Pcal_0593 (143 aa).

Belongs to the UPF0201 family.

This chain is UPF0201 protein Pcal_0593, found in Pyrobaculum calidifontis (strain DSM 21063 / JCM 11548 / VA1).